We begin with the raw amino-acid sequence, 171 residues long: Shikimate kinase (171 aa).

14–19 contributes to the ATP binding site; the sequence is GAGKST. Mg(2+) is bound at residue Ser18. Substrate is bound by residues Asp36, Arg60, and Gly82. Residue Arg120 participates in ATP binding. Arg139 contributes to the substrate binding site. An ATP-binding site is contributed by Gln156.

Belongs to the shikimate kinase family. In terms of assembly, monomer. Mg(2+) serves as cofactor.

The protein resides in the cytoplasm. The enzyme catalyses shikimate + ATP = 3-phosphoshikimate + ADP + H(+). The protein operates within metabolic intermediate biosynthesis; chorismate biosynthesis; chorismate from D-erythrose 4-phosphate and phosphoenolpyruvate: step 5/7. Functionally, catalyzes the specific phosphorylation of the 3-hydroxyl group of shikimic acid using ATP as a cosubstrate. The chain is Shikimate kinase from Pseudoalteromonas atlantica (strain T6c / ATCC BAA-1087).